The sequence spans 177 residues: Putative pre-16S rRNA nuclease (177 aa).

This sequence belongs to the YqgF nuclease family.

It is found in the cytoplasm. Its function is as follows. Could be a nuclease involved in processing of the 5'-end of pre-16S rRNA. The chain is Putative pre-16S rRNA nuclease from Psychrobacter arcticus (strain DSM 17307 / VKM B-2377 / 273-4).